The sequence spans 471 residues: Ribosomal protein uS12 methylthiotransferase RimO (471 aa).

The 116-residue stretch at 23–138 (PKIGFVSLGC…VMDAVHVHVP (116 aa)) folds into the MTTase N-terminal domain. The [4Fe-4S] cluster site is built by C32, C68, C97, C169, C173, and C176. Residues 155-396 (LTPRHYAYLK…MAVAEAVSAE (242 aa)) enclose the Radical SAM core domain. One can recognise a TRAM domain in the interval 399-471 (RERVGAEMQV…QGHDLVGQPL (73 aa)).

This sequence belongs to the methylthiotransferase family. RimO subfamily. The cofactor is [4Fe-4S] cluster.

It localises to the cytoplasm. It carries out the reaction L-aspartate(89)-[ribosomal protein uS12]-hydrogen + (sulfur carrier)-SH + AH2 + 2 S-adenosyl-L-methionine = 3-methylsulfanyl-L-aspartate(89)-[ribosomal protein uS12]-hydrogen + (sulfur carrier)-H + 5'-deoxyadenosine + L-methionine + A + S-adenosyl-L-homocysteine + 2 H(+). Its function is as follows. Catalyzes the methylthiolation of an aspartic acid residue of ribosomal protein uS12. In Methylibium petroleiphilum (strain ATCC BAA-1232 / LMG 22953 / PM1), this protein is Ribosomal protein uS12 methylthiotransferase RimO.